A 536-amino-acid polypeptide reads, in one-letter code: Maintenance of mitochondrial morphology protein 1 (536 aa).

Residues 1 to 25 (MAGPSNQTQPPPPVLTQPSLSFTQG) lie on the Lumenal side of the membrane. Residues 26–46 (LLVGQLSVVLLIGAFIKFFIF) traverse the membrane as a helical segment. At 47 to 536 (GEAPPHPSRN…GSMPDPVVVT (490 aa)) the chain is on the cytoplasmic side. Disordered regions lie at residues 52–135 (HPSR…SHQP), 275–331 (GPGT…ATAA), 416–467 (GRTG…GGSM), and 505–536 (YGGA…VVVT). Polar residues-rich tracts occupy residues 69-81 (YSLN…SSPR), 88-105 (STSN…NTRS), and 112-121 (YSATPTNPTS). The span at 122 to 132 (KHSRSRPHHSS) shows a compositional bias: basic residues. The 276-residue stretch at 134–409 (QPESLDWFNV…EPRVQVVGLP (276 aa)) folds into the SMP-LTD domain. The span at 321 to 331 (TNTNTAGATAA) shows a compositional bias: low complexity. Composition is skewed to gly residues over residues 442–467 (TAGG…GGSM) and 507–517 (GAQGGGGGGGR).

The protein belongs to the MMM1 family. In terms of assembly, homodimer. Component of the ER-mitochondria encounter structure (ERMES) or MDM complex, composed of MMM1, MDM10, MDM12 and MDM34. An MMM1 homodimer associates with one molecule of MDM12 on each side in a pairwise head-to-tail manner, and the SMP-LTD domains of MMM1 and MDM12 generate a continuous hydrophobic tunnel for phospholipid trafficking.

The protein resides in the endoplasmic reticulum membrane. Functionally, component of the ERMES/MDM complex, which serves as a molecular tether to connect the endoplasmic reticulum (ER) and mitochondria. Components of this complex are involved in the control of mitochondrial shape and protein biogenesis, and function in nonvesicular lipid trafficking between the ER and mitochondria. The MDM12-MMM1 subcomplex functions in the major beta-barrel assembly pathway that is responsible for biogenesis of all outer membrane beta-barrel proteins, and acts in a late step after the SAM complex. The MDM10-MDM12-MMM1 subcomplex further acts in the TOM40-specific pathway after the action of the MDM12-MMM1 complex. Essential for establishing and maintaining the structure of mitochondria and maintenance of mtDNA nucleoids. The chain is Maintenance of mitochondrial morphology protein 1 from Ajellomyces dermatitidis (strain ER-3 / ATCC MYA-2586) (Blastomyces dermatitidis).